A 175-amino-acid chain; its full sequence is Flagellar assembly factor FliW (175 aa).

Belongs to the FliW family. Interacts with translational regulator CsrA and flagellin(s).

It localises to the cytoplasm. In terms of biological role, acts as an anti-CsrA protein, binds CsrA and prevents it from repressing translation of its target genes, one of which is flagellin. Binds to flagellin and participates in the assembly of the flagellum. The sequence is that of Flagellar assembly factor FliW from Bdellovibrio bacteriovorus (strain ATCC 15356 / DSM 50701 / NCIMB 9529 / HD100).